The primary structure comprises 510 residues: GMP synthase [glutamine-hydrolyzing] (510 aa).

The Glutamine amidotransferase type-1 domain maps to 5 to 195 (LVIVVDFGGQ…LYEICKADGD (191 aa)). C82 serves as the catalytic Nucleophile. Catalysis depends on residues H169 and E171. One can recognise a GMPS ATP-PPase domain in the interval 196–385 (WTMENFLEEQ…LEMPEYLVYR (190 aa)). 223–229 (SGGVDSS) serves as a coordination point for ATP.

In terms of assembly, homodimer.

It carries out the reaction XMP + L-glutamine + ATP + H2O = GMP + L-glutamate + AMP + diphosphate + 2 H(+). It participates in purine metabolism; GMP biosynthesis; GMP from XMP (L-Gln route): step 1/1. Functionally, catalyzes the synthesis of GMP from XMP. This Finegoldia magna (strain ATCC 29328 / DSM 20472 / WAL 2508) (Peptostreptococcus magnus) protein is GMP synthase [glutamine-hydrolyzing].